The primary structure comprises 874 residues: Putative disease resistance protein At5g05400 (874 aa).

Residues 22-74 (LSRNQNRFRNLVDHVAALKKTVRQLEARRDDLLKRIKVQEDRGLNLLDEVQQW) are a coiled coil. The 296-residue stretch at 139-434 (AQKGPIPKVE…GQGIILGSKG (296 aa)) folds into the NB-ARC domain. An ATP-binding site is contributed by 182 to 189 (GMGGVGKT). LRR repeat units follow at residues 483–505 (QKNV…EDQK), 506–527 (AVRR…LHCP), 528–548 (KLET…EFLS), 552–574 (ILMV…SPLY), 575–597 (SLRF…YALR), 598–620 (NLLY…HDLP), and 621–642 (NLEV…VRQI).

This sequence belongs to the disease resistance NB-LRR family.

In terms of biological role, potential disease resistance protein. In Arabidopsis thaliana (Mouse-ear cress), this protein is Putative disease resistance protein At5g05400.